Here is a 438-residue protein sequence, read N- to C-terminus: DNA primase small subunit (438 aa).

Catalysis depends on residues Glu-63, Asp-127, and Asp-129. The Zinc knuckle motif motif lies at 139–149; sequence CCSGAGVCLKC.

This sequence belongs to the eukaryotic-type primase small subunit family. As to quaternary structure, heterodimer of a catalytic subunit Prim1 and a regulatory subunit Prim2, also known as the DNA primase complex. Component of the alpha DNA polymerase complex (also known as the alpha DNA polymerase-primase complex) consisting of four subunits: the catalytic subunit PolA1, the regulatory subunit PolA2, and the primase complex subunits Prim1 and Prim2 respectively. PolA1 associates with the DNA primase complex before association with PolA2. Requires Mg(2+) as cofactor. The cofactor is Mn(2+). Expressed in embryos (at protein level).

With respect to regulation, the presence of the regulatory subunit Prim2 accelerates the kinetics of initiation and primer extension. Functionally, catalytic subunit of the DNA primase complex and component of the DNA polymerase alpha complex (also known as the alpha DNA polymerase-primase complex) which play an essential role in the initiation of DNA synthesis. During the S phase of the cell cycle, the DNA polymerase alpha complex (composed of a catalytic subunit PolA1, an accessory subunit PolA2 and two primase subunits, the catalytic subunit Prim1 and the regulatory subunit Prim2) is recruited to DNA at the replicative forks. The primase subunit of the polymerase alpha complex initiates DNA synthesis by oligomerising short RNA primers on both leading and lagging strands. These primers are initially extended by the polymerase alpha catalytic subunit and subsequently transferred to polymerase delta and polymerase epsilon for processive synthesis on the lagging and leading strand, respectively. In the primase complex, both subunits are necessary for the initial di-nucleotide formation, but the extension of the primer depends only on the catalytic subunit. Can add both ribo- and deoxynucleotides during elongation of the primers. Binds single stranded DNA. The sequence is that of DNA primase small subunit from Drosophila melanogaster (Fruit fly).